The chain runs to 95 residues: Pyrimidine/purine nucleoside phosphorylase (95 aa).

The protein belongs to the nucleoside phosphorylase PpnP family.

The catalysed reaction is a purine D-ribonucleoside + phosphate = a purine nucleobase + alpha-D-ribose 1-phosphate. The enzyme catalyses adenosine + phosphate = alpha-D-ribose 1-phosphate + adenine. It catalyses the reaction cytidine + phosphate = cytosine + alpha-D-ribose 1-phosphate. It carries out the reaction guanosine + phosphate = alpha-D-ribose 1-phosphate + guanine. The catalysed reaction is inosine + phosphate = alpha-D-ribose 1-phosphate + hypoxanthine. The enzyme catalyses thymidine + phosphate = 2-deoxy-alpha-D-ribose 1-phosphate + thymine. It catalyses the reaction uridine + phosphate = alpha-D-ribose 1-phosphate + uracil. It carries out the reaction xanthosine + phosphate = alpha-D-ribose 1-phosphate + xanthine. Catalyzes the phosphorolysis of diverse nucleosides, yielding D-ribose 1-phosphate and the respective free bases. Can use uridine, adenosine, guanosine, cytidine, thymidine, inosine and xanthosine as substrates. Also catalyzes the reverse reactions. This is Pyrimidine/purine nucleoside phosphorylase from Enterobacter sp. (strain 638).